Reading from the N-terminus, the 306-residue chain is Bifunctional protein FolD 1 (306 aa).

Residues 170 to 172 (GRG), Thr-199, and Val-240 contribute to the NADP(+) site. A disordered region spans residues 285–306 (ARRTRSSRTPVRLPDSGAPAGR).

Belongs to the tetrahydrofolate dehydrogenase/cyclohydrolase family. In terms of assembly, homodimer.

The catalysed reaction is (6R)-5,10-methylene-5,6,7,8-tetrahydrofolate + NADP(+) = (6R)-5,10-methenyltetrahydrofolate + NADPH. It carries out the reaction (6R)-5,10-methenyltetrahydrofolate + H2O = (6R)-10-formyltetrahydrofolate + H(+). The protein operates within one-carbon metabolism; tetrahydrofolate interconversion. In terms of biological role, catalyzes the oxidation of 5,10-methylenetetrahydrofolate to 5,10-methenyltetrahydrofolate and then the hydrolysis of 5,10-methenyltetrahydrofolate to 10-formyltetrahydrofolate. In Salinispora tropica (strain ATCC BAA-916 / DSM 44818 / JCM 13857 / NBRC 105044 / CNB-440), this protein is Bifunctional protein FolD 1.